A 178-amino-acid chain; its full sequence is Acireductone dioxygenase (178 aa).

Residues histidine 100, histidine 102, glutamate 106, and histidine 145 each contribute to the Fe(2+) site. Ni(2+) is bound by residues histidine 100, histidine 102, glutamate 106, and histidine 145.

This sequence belongs to the acireductone dioxygenase (ARD) family. Monomer. Fe(2+) serves as cofactor. Ni(2+) is required as a cofactor.

The catalysed reaction is 1,2-dihydroxy-5-(methylsulfanyl)pent-1-en-3-one + O2 = 3-(methylsulfanyl)propanoate + CO + formate + 2 H(+). The enzyme catalyses 1,2-dihydroxy-5-(methylsulfanyl)pent-1-en-3-one + O2 = 4-methylsulfanyl-2-oxobutanoate + formate + 2 H(+). It functions in the pathway amino-acid biosynthesis; L-methionine biosynthesis via salvage pathway; L-methionine from S-methyl-5-thio-alpha-D-ribose 1-phosphate: step 5/6. Catalyzes 2 different reactions between oxygen and the acireductone 1,2-dihydroxy-3-keto-5-methylthiopentene (DHK-MTPene) depending upon the metal bound in the active site. Fe-containing acireductone dioxygenase (Fe-ARD) produces formate and 2-keto-4-methylthiobutyrate (KMTB), the alpha-ketoacid precursor of methionine in the methionine recycle pathway. Ni-containing acireductone dioxygenase (Ni-ARD) produces methylthiopropionate, carbon monoxide and formate, and does not lie on the methionine recycle pathway. The chain is Acireductone dioxygenase from Bacillus velezensis (strain DSM 23117 / BGSC 10A6 / LMG 26770 / FZB42) (Bacillus amyloliquefaciens subsp. plantarum).